Here is a 279-residue protein sequence, read N- to C-terminus: Elongation factor Ts (279 aa).

Residues 79 to 82 (TDFV) are involved in Mg(2+) ion dislocation from EF-Tu.

It belongs to the EF-Ts family.

The protein localises to the cytoplasm. Functionally, associates with the EF-Tu.GDP complex and induces the exchange of GDP to GTP. It remains bound to the aminoacyl-tRNA.EF-Tu.GTP complex up to the GTP hydrolysis stage on the ribosome. The chain is Elongation factor Ts from Phytoplasma mali (strain AT).